An 83-amino-acid polypeptide reads, in one-letter code: Large ribosomal subunit protein bL27 (83 aa).

A disordered region spans residues Met-1–Phe-26.

Belongs to the bacterial ribosomal protein bL27 family.

The sequence is that of Large ribosomal subunit protein bL27 from Desulfosudis oleivorans (strain DSM 6200 / JCM 39069 / Hxd3) (Desulfococcus oleovorans).